An 86-amino-acid polypeptide reads, in one-letter code: Large ribosomal subunit protein bL31B (86 aa).

It belongs to the bacterial ribosomal protein bL31 family. Type B subfamily. As to quaternary structure, part of the 50S ribosomal subunit.

The polypeptide is Large ribosomal subunit protein bL31B (Salmonella arizonae (strain ATCC BAA-731 / CDC346-86 / RSK2980)).